The following is a 95-amino-acid chain: Integration host factor subunit beta (95 aa).

The tract at residues 56–76 (RAPRTGRNPKTGTSVELDGKY) is disordered.

It belongs to the bacterial histone-like protein family. In terms of assembly, heterodimer of an alpha and a beta chain.

This protein is one of the two subunits of integration host factor, a specific DNA-binding protein that functions in genetic recombination as well as in transcriptional and translational control. The chain is Integration host factor subunit beta from Shewanella denitrificans (strain OS217 / ATCC BAA-1090 / DSM 15013).